A 719-amino-acid chain; its full sequence is Putative ankyrin repeat protein RBE_0319 (719 aa).

ANK repeat units follow at residues 377–406 (VAEE…EISS), 408–438 (TLIK…NINE), 442–472 (NGGT…EVNK), 476–506 (YGFT…EINQ), 510–540 (YQTT…KFNE), 544–572 (LGYT…DINQ), 576–605 (DGYT…NVNE), 609–639 (HGLT…EVSE), and 642–672 (QYGT…NLNK).

In Rickettsia bellii (strain RML369-C), this protein is Putative ankyrin repeat protein RBE_0319.